The primary structure comprises 281 residues: uncharacterized protein (281 aa).

Residues 5–27 form a helical membrane-spanning segment; that stretch reads AYVTVIYGNNIYLTGALVLGYTL.

It localises to the membrane. This is an uncharacterized protein from Acanthamoeba polyphaga mimivirus (APMV).